The chain runs to 411 residues: Citrate synthase (411 aa).

Residues H304 and D363 contribute to the active site.

The protein belongs to the citrate synthase family.

The enzyme catalyses oxaloacetate + acetyl-CoA + H2O = citrate + CoA + H(+). It participates in carbohydrate metabolism; tricarboxylic acid cycle; isocitrate from oxaloacetate: step 1/2. The sequence is that of Citrate synthase (gltA) from Rickettsia massiliae.